Here is a 239-residue protein sequence, read N- to C-terminus: Adenylate kinase 2 (239 aa).

29 to 34 (GSGKGT) is a binding site for ATP. Residues 49 to 78 (STGDILRAIIASGSELGQKVQKITESGGLV) form an NMP region. AMP is bound by residues T50, R55, 76–78 (GLV), 104–107 (GFPR), and Q111. An LID region spans residues 145-182 (GRLFHLASGRSYHELFNPPKVPMVDDITGDRLVHRSDD). Residues R146 and 155–156 (SY) contribute to the ATP site. Positions 179 and 190 each coordinate AMP.

It belongs to the adenylate kinase family. AK2 subfamily. Monomer. Requires Mg(2+) as cofactor.

The protein resides in the cytoplasm. It localises to the cytosol. The catalysed reaction is AMP + ATP = 2 ADP. It functions in the pathway purine metabolism; purine nucleotide biosynthesis. In terms of biological role, catalyzes the reversible transfer of the terminal phosphate group between ATP and AMP. Plays an important role in cellular energy homeostasis and in adenine nucleotide metabolism. The polypeptide is Adenylate kinase 2 (Schistosoma mansoni (Blood fluke)).